A 306-amino-acid polypeptide reads, in one-letter code: Elongation factor Ts (306 aa).

Positions 80–83 are involved in Mg(2+) ion dislocation from EF-Tu; that stretch reads TDFV.

It belongs to the EF-Ts family.

The protein resides in the cytoplasm. In terms of biological role, associates with the EF-Tu.GDP complex and induces the exchange of GDP to GTP. It remains bound to the aminoacyl-tRNA.EF-Tu.GTP complex up to the GTP hydrolysis stage on the ribosome. The polypeptide is Elongation factor Ts (Clostridium novyi (strain NT)).